A 490-amino-acid chain; its full sequence is tRNA modification GTPase MnmE (490 aa).

(6S)-5-formyl-5,6,7,8-tetrahydrofolate contacts are provided by R23, E80, and K133. In terms of domain architecture, TrmE-type G spans 229-412 (GIEVVIAGQP…LRRILLEVAG (184 aa)). N239 contributes to the K(+) binding site. Residues 239–244 (NAGKSS), 258–264 (TPVAGTT), and 283–286 (DTAG) each bind GTP. S243 lines the Mg(2+) pocket. The K(+) site is built by T258, V260, and T263. T264 is a binding site for Mg(2+). A compositionally biased stretch (low complexity) spans 366-382 (PTAPTESAAVPPASARP). The interval 366 to 388 (PTAPTESAAVPPASARPAPAPRP) is disordered. 393 to 395 (SAR) contributes to the GTP binding site. Residue K490 participates in (6S)-5-formyl-5,6,7,8-tetrahydrofolate binding.

Belongs to the TRAFAC class TrmE-Era-EngA-EngB-Septin-like GTPase superfamily. TrmE GTPase family. As to quaternary structure, homodimer. Heterotetramer of two MnmE and two MnmG subunits. K(+) is required as a cofactor.

It is found in the cytoplasm. In terms of biological role, exhibits a very high intrinsic GTPase hydrolysis rate. Involved in the addition of a carboxymethylaminomethyl (cmnm) group at the wobble position (U34) of certain tRNAs, forming tRNA-cmnm(5)s(2)U34. The sequence is that of tRNA modification GTPase MnmE from Verminephrobacter eiseniae (strain EF01-2).